A 505-amino-acid polypeptide reads, in one-letter code: MALIEAFLLQGSPTGTILGALLLFLVIYLFSSSSSSQDKEKYPPGPKPLPLLGNLHILDLKKTYLSLLELSKKYGPIYTVYLGPKKVVILSGYKIVKEALVNLSEEFGDRDISPIFHDFNRGYGIAFSNGENWREMRRFALSTLRDFGMGRKRSEELIIEEIKYVKEEFEKFGGNPFETKLPLALAISNIIASIVFSVRFEYSNTKLHRMVGRAYENMKLTGSPSVQIYNMFPWLRPIVANRNQIVKNLRDTFKQNEELINGVMKTLDPFNPRGIVDSFLIRQQKDEESGKTDSLYNSNNLYCTVNNLFGAGTDTTVTTLRWGLLLMAKYPEIQAKVQDEIERVIGGRQPVVEDRKNLPYTDAVIHEIQRFADISPIGAPRQTTCDVHLNGYFIKKGTPVFPLLVSVLRDENEWETPDSFNPKHFLNKQGQFVKKDAFMPFGAGRRVCIGESLARMELFLFFTSLLQYFRFTPPPGVSEDDLDLTPVVGFTLNPKPHQLCAVKRS.

The chain crosses the membrane as a helical span at residues 7 to 27; it reads FLLQGSPTGTILGALLLFLVI. Cys448 contributes to the heme binding site.

It belongs to the cytochrome P450 family. It depends on heme as a cofactor. Detected in liver and ovary.

It localises to the endoplasmic reticulum membrane. The protein localises to the microsome membrane. In terms of biological role, metabolizes aflatoxin B1 (AFB1) to the cytotoxic derivative AFB1 exo-8,9-epoxide. Does not show activity towards lauric acid. This Danio rerio (Zebrafish) protein is Cytochrome P450 2K6.